Reading from the N-terminus, the 372-residue chain is 2,7-anhydro-N-acetylneuraminate hydratase (372 aa).

Residues Tyr11, Phe12, Asp33, Asn36, Thr68, Asn70, His73, Glu90, Lys91, and Trp160 each coordinate NAD(+).

The protein belongs to the Gfo/Idh/MocA family. In terms of assembly, homodimer. Requires NAD(+) as cofactor.

It catalyses the reaction N-acetyl-2,7-anhydro-alpha-neuraminate + H2O = N-acetyl-alpha-neuraminate. It carries out the reaction 2-deoxy-2,3-dehydro-N-acetylneuraminate + H2O = N-acetyl-alpha-neuraminate. All conversions require NAD(+) as a cofactor, which is regenerated in the reaction. The presence of EGTA and several divalent cations does not affect the activity. Functionally, hydratase involved in the degradation of sialic acids. Catalyzes the reversible conversion of the dehydrated form of N-acetylneuraminate (Neu5Ac), 2,7-anhydro-N-acetylneuraminate (2,7-AN), to Neu5Ac. Also catalyzes the irreversible conversion of 2-deoxy-2,3-didehydro-N-acetylneuraminate (2,3-EN) to Neu5Ac. The reaction mechanism involves keto intermediates and the transient formation of NADH. The protein is 2,7-anhydro-N-acetylneuraminate hydratase of Escherichia coli (strain K12).